A 94-amino-acid chain; its full sequence is Parvalbumin beta 4 (94 aa).

An N-acetylalanine modification is found at A1. EF-hand domains lie at 36 to 63 (FFAI…FSAG) and 67 to 94 (LSDA…EFAA). Ca(2+) is bound by residues D41, D43, S45, F47, E49, E52, D80, D82, D84, M86, and E91.

The protein belongs to the parvalbumin family.

Its function is as follows. In muscle, parvalbumin is thought to be involved in relaxation after contraction. It binds two calcium ions. The sequence is that of Parvalbumin beta 4 from Merluccius bilinearis (Silver hake).